The primary structure comprises 386 residues: Phosphatidyl-myo-inositol mannosyltransferase (386 aa).

Y9 and G16 together coordinate GDP-alpha-D-mannose. A 1,2-diacyl-sn-glycero-3-phospho-(1D-myo-inositol) is bound by residues Q18, 62–63, and R68; that span reads YN. GDP-alpha-D-mannose is bound by residues R196, 201-202, 251-253, K256, 274-278, and E282; these read RK, VDD, and ESFGI.

It belongs to the glycosyltransferase group 1 family. Glycosyltransferase 4 subfamily. As to quaternary structure, monomer. The cofactor is Mg(2+).

The protein localises to the cell membrane. It catalyses the reaction a 1,2-diacyl-sn-glycero-3-phospho-(1D-myo-inositol) + GDP-alpha-D-mannose = a 1,2-diacyl-sn-glycero-3-phospho-[alpha-D-mannopyranosyl-(1&lt;-&gt;6)-D-myo-inositol] + GDP + H(+). The protein operates within phospholipid metabolism; phosphatidylinositol metabolism. Functionally, involved in the biosynthesis of phosphatidyl-myo-inositol mannosides (PIM) which are early precursors in the biosynthesis of lipomannans (LM) and lipoarabinomannans (LAM). Catalyzes the addition of a mannosyl residue from GDP-D-mannose (GDP-Man) to the position 2 of the carrier lipid phosphatidyl-myo-inositol (PI) to generate a phosphatidyl-myo-inositol bearing an alpha-1,2-linked mannose residue (PIM1). In contrary to PimB, the mannosyltransferase PimA is unable to transfer a mannose residue to the position 6 of the phosphatidyl-myo-inositol of PIM1. In Mycolicibacterium smegmatis (strain ATCC 700084 / mc(2)155) (Mycobacterium smegmatis), this protein is Phosphatidyl-myo-inositol mannosyltransferase.